A 196-amino-acid polypeptide reads, in one-letter code: Ribosome maturation factor RimM (196 aa).

A PRC barrel domain is found at 118-196; that stretch reads QGEYYWRDLI…EMTVDWDPDF (79 aa).

This sequence belongs to the RimM family. In terms of assembly, binds ribosomal protein uS19.

The protein resides in the cytoplasm. Functionally, an accessory protein needed during the final step in the assembly of 30S ribosomal subunit, possibly for assembly of the head region. Essential for efficient processing of 16S rRNA. May be needed both before and after RbfA during the maturation of 16S rRNA. It has affinity for free ribosomal 30S subunits but not for 70S ribosomes. The chain is Ribosome maturation factor RimM from Alcanivorax borkumensis (strain ATCC 700651 / DSM 11573 / NCIMB 13689 / SK2).